Here is an 856-residue protein sequence, read N- to C-terminus: DNA mismatch repair protein MutS (856 aa).

618–625 (GPNMGGKS) is a binding site for ATP.

Belongs to the DNA mismatch repair MutS family.

Its function is as follows. This protein is involved in the repair of mismatches in DNA. It is possible that it carries out the mismatch recognition step. This protein has a weak ATPase activity. This Shewanella baltica (strain OS185) protein is DNA mismatch repair protein MutS.